Consider the following 279-residue polypeptide: Urease accessory protein UreD (279 aa).

Belongs to the UreD family. As to quaternary structure, ureD, UreF and UreG form a complex that acts as a GTP-hydrolysis-dependent molecular chaperone, activating the urease apoprotein by helping to assemble the nickel containing metallocenter of UreC. The UreE protein probably delivers the nickel.

It localises to the cytoplasm. Required for maturation of urease via the functional incorporation of the urease nickel metallocenter. This chain is Urease accessory protein UreD, found in Trichodesmium erythraeum (strain IMS101).